Here is a 303-residue protein sequence, read N- to C-terminus: Uricase (303 aa).

Catalysis depends on charge relay system residues Lys-12 and Thr-60. 7 residues coordinate urate: Thr-60, Asp-61, Phe-162, Arg-179, Val-234, Gln-235, and Asn-261. The active-site Charge relay system is His-263. Positions 301–303 (TKL) match the Microbody targeting signal motif.

Belongs to the uricase family.

It localises to the peroxisome. It catalyses the reaction urate + O2 + H2O = 5-hydroxyisourate + H2O2. Its pathway is purine metabolism; urate degradation; (S)-allantoin from urate: step 1/3. Catalyzes the oxidation of uric acid to 5-hydroxyisourate, which is further processed to form (S)-allantoin. This is Uricase from Cyberlindnera jadinii (Torula yeast).